Consider the following 226-residue polypeptide: Neuron-specific vesicular protein calcyon (226 aa).

The tract at residues 1–23 (MVKLGCSFSGKPGKETGDQDGAA) is disordered. At 1–88 (MVKLGCSFSG…EEGRRLPTAR (88 aa)) the chain is on the extracellular side. Residues 89–109 (MIAFAMALLGCVLIMYKAIWY) traverse the membrane as a helical segment. Over 110-226 (DQFTCPDGFL…AEDVPSQSPK (117 aa)) the chain is Cytoplasmic. The segment at 189–226 (TAAAAAAAEGNEPSGKPLDMREKEDPQKAEDVPSQSPK) is disordered. Residues 206–219 (LDMREKEDPQKAED) show a composition bias toward basic and acidic residues.

The protein belongs to the NSG family. As to quaternary structure, interacts with CLTA. In terms of tissue distribution, expressed exclusively in neurons (at protein level). In all age groups, expressed at significantly higher levels in the medial prefrontal and orbital frontal cortices of spontaneously hypertensive rats (SHR), a model of attention deficit-hyperactivity disorder, than Wistar Kyoto (WKY) animals. In the motor cortex, dorsal striatum and nucleus accumbens, expression is significantly elevated in SHR only in younger animals.

The protein localises to the cytoplasmic vesicle membrane. Its subcellular location is the cell membrane. In terms of biological role, interacts with clathrin light chain A and stimulates clathrin self-assembly and clathrin-mediated endocytosis. The sequence is that of Neuron-specific vesicular protein calcyon (Caly) from Rattus norvegicus (Rat).